We begin with the raw amino-acid sequence, 625 residues long: Acetolactate synthase (625 aa).

The tract at residues 1-29 is disordered; the sequence is MSAPTKPHARPQGAGNSVPNTVKPATQFP. The span at 14-29 shows a compositional bias: polar residues; it reads AGNSVPNTVKPATQFP. E92 contacts thiamine diphosphate. FAD-binding positions include R194, 300 to 321, and 343 to 362; these read HGTV…LGTR and DIDP…IVGD. Positions 436-516 are thiamine pyrophosphate binding; sequence QHQMWAAQFI…IKVALINNGN (81 aa). Positions 487 and 514 each coordinate Mg(2+).

The protein belongs to the TPP enzyme family. The cofactor is Mg(2+). Thiamine diphosphate is required as a cofactor.

The catalysed reaction is 2 pyruvate + H(+) = (2S)-2-acetolactate + CO2. It functions in the pathway amino-acid biosynthesis; L-isoleucine biosynthesis; L-isoleucine from 2-oxobutanoate: step 1/4. It participates in amino-acid biosynthesis; L-valine biosynthesis; L-valine from pyruvate: step 1/4. The chain is Acetolactate synthase (ilvB) from Mycobacterium leprae (strain TN).